Here is a 29-residue protein sequence, read N- to C-terminus: Cliotide T18 (29 aa).

A cross-link (cyclopeptide (Gly-Asn)) is located at residues 1–29 (GLPICGETCFTGTCYTPGCTCSYPVCKKN). 3 disulfide bridges follow: Cys5-Cys19, Cys9-Cys21, and Cys14-Cys26.

Post-translationally, contains 3 disulfide bonds. In terms of processing, this is a cyclic peptide. In terms of tissue distribution, expressed in root nodules but not in seed.

Probably participates in a plant defense mechanism. This Clitoria ternatea (Butterfly pea) protein is Cliotide T18.